A 183-amino-acid chain; its full sequence is Large ribosomal subunit protein uL5 (183 aa).

It belongs to the universal ribosomal protein uL5 family. In terms of assembly, part of the 50S ribosomal subunit; part of the 5S rRNA/L5/L18/L25 subcomplex. Contacts the 5S rRNA and the P site tRNA. Forms a bridge to the 30S subunit in the 70S ribosome.

Functionally, this is one of the proteins that bind and probably mediate the attachment of the 5S RNA into the large ribosomal subunit, where it forms part of the central protuberance. In the 70S ribosome it contacts protein S13 of the 30S subunit (bridge B1b), connecting the 2 subunits; this bridge is implicated in subunit movement. Contacts the P site tRNA; the 5S rRNA and some of its associated proteins might help stabilize positioning of ribosome-bound tRNAs. The chain is Large ribosomal subunit protein uL5 from Leptospira biflexa serovar Patoc (strain Patoc 1 / Ames).